A 337-amino-acid polypeptide reads, in one-letter code: DNA-directed RNA polymerase subunit alpha (337 aa).

Residues 1–233 form an alpha N-terminal domain (alpha-NTD) region; it reads MVREKVTVST…DLFIPFLHME (233 aa). An alpha C-terminal domain (alpha-CTD) region spans residues 265 to 337; it reads KKIALKSIFI…FVIDLAKNKF (73 aa).

It belongs to the RNA polymerase alpha chain family. In plastids the minimal PEP RNA polymerase catalytic core is composed of four subunits: alpha, beta, beta', and beta''. When a (nuclear-encoded) sigma factor is associated with the core the holoenzyme is formed, which can initiate transcription.

It is found in the plastid. It localises to the chloroplast. The catalysed reaction is RNA(n) + a ribonucleoside 5'-triphosphate = RNA(n+1) + diphosphate. DNA-dependent RNA polymerase catalyzes the transcription of DNA into RNA using the four ribonucleoside triphosphates as substrates. This Nicotiana sylvestris (Wood tobacco) protein is DNA-directed RNA polymerase subunit alpha.